Here is a 140-residue protein sequence, read N- to C-terminus: Large ribosomal subunit protein mL43 (140 aa).

This sequence belongs to the mitochondrion-specific ribosomal protein mL43 family. In terms of assembly, component of the mitochondrial large ribosomal subunit (mt-LSU). Mature yeast 74S mitochondrial ribosomes consist of a small (37S) and a large (54S) subunit. The 37S small subunit contains a 15S ribosomal RNA (15S mt-rRNA) and 34 different proteins. The 54S large subunit contains a 21S rRNA (21S mt-rRNA) and 46 different proteins.

It localises to the mitochondrion. Functionally, component of the mitochondrial ribosome (mitoribosome), a dedicated translation machinery responsible for the synthesis of mitochondrial genome-encoded proteins, including at least some of the essential transmembrane subunits of the mitochondrial respiratory chain. The mitoribosomes are attached to the mitochondrial inner membrane and translation products are cotranslationally integrated into the membrane. Also has an extraribosomal function, being essential for mitochondrial genome integrity. May interact with MHR1 to take part in the mtDNA repair mechanism. In Saccharomyces cerevisiae (strain ATCC 204508 / S288c) (Baker's yeast), this protein is Large ribosomal subunit protein mL43 (MRPL51).